The primary structure comprises 410 residues: Cysteine desulfurase IscS (410 aa).

Pyridoxal 5'-phosphate is bound by residues 80-81 (AT), N160, Q188, and 208-210 (SGH). K211 carries the N6-(pyridoxal phosphate)lysine modification. Position 248 (T248) interacts with pyridoxal 5'-phosphate. C334 acts as the Cysteine persulfide intermediate in catalysis. [2Fe-2S] cluster is bound at residue C334.

Belongs to the class-V pyridoxal-phosphate-dependent aminotransferase family. NifS/IscS subfamily. Homodimer. Forms a heterotetramer with IscU, interacts with other sulfur acceptors. Pyridoxal 5'-phosphate is required as a cofactor.

Its subcellular location is the cytoplasm. It catalyses the reaction (sulfur carrier)-H + L-cysteine = (sulfur carrier)-SH + L-alanine. It participates in cofactor biosynthesis; iron-sulfur cluster biosynthesis. Its function is as follows. Master enzyme that delivers sulfur to a number of partners involved in Fe-S cluster assembly, tRNA modification or cofactor biosynthesis. Catalyzes the removal of elemental sulfur atoms from cysteine to produce alanine. Functions as a sulfur delivery protein for Fe-S cluster synthesis onto IscU, an Fe-S scaffold assembly protein, as well as other S acceptor proteins. The chain is Cysteine desulfurase IscS from Rickettsia peacockii (strain Rustic).